Consider the following 465-residue polypeptide: tRNA modification GTPase MnmE (465 aa).

Residues R23, E81, and K120 each contribute to the (6S)-5-formyl-5,6,7,8-tetrahydrofolate site. The region spanning 217-389 (GVHVVLAGRP…LIASLCDKVG (173 aa)) is the TrmE-type G domain. N227 is a K(+) binding site. Residues 227–232 (NAGKSS), 246–252 (TDVAGTT), and 271–274 (DTAG) contribute to the GTP site. S231 is a Mg(2+) binding site. K(+) is bound by residues T246, V248, and T251. Residue T252 coordinates Mg(2+). A (6S)-5-formyl-5,6,7,8-tetrahydrofolate-binding site is contributed by K465.

The protein belongs to the TRAFAC class TrmE-Era-EngA-EngB-Septin-like GTPase superfamily. TrmE GTPase family. Homodimer. Heterotetramer of two MnmE and two MnmG subunits. Requires K(+) as cofactor.

It localises to the cytoplasm. Exhibits a very high intrinsic GTPase hydrolysis rate. Involved in the addition of a carboxymethylaminomethyl (cmnm) group at the wobble position (U34) of certain tRNAs, forming tRNA-cmnm(5)s(2)U34. In Psychrobacter sp. (strain PRwf-1), this protein is tRNA modification GTPase MnmE.